A 590-amino-acid chain; its full sequence is Nuclear receptor subfamily 2 group C member 1 (590 aa).

The segment at 1-166 (MATIEEIAHQ…RLQRCIAFGM (166 aa)) is required for interaction with KAT2B. Positions 98-173 (FDLCVVCGDK…FGMKQDSVQC (76 aa)) form a DNA-binding region, nuclear receptor. NR C4-type zinc fingers lie at residues 101–121 (CVVC…CEGC) and 137–156 (CRGS…CQYC). Residues Ser-185 and Ser-203 each carry the phosphoserine modification. The residue at position 208 (Thr-208) is a Phosphothreonine. Thr-210 is modified (phosphothreonine; by MAPK1). Lys-238 participates in a covalent cross-link: Glycyl lysine isopeptide (Lys-Gly) (interchain with G-Cter in SUMO); alternate. A Glycyl lysine isopeptide (Lys-Gly) (interchain with G-Cter in SUMO2); alternate cross-link involves residue Lys-238. Residues 333-577 (EGMEGSPHLI…SVIPHILKME (245 aa)) enclose the NR LBD domain. 2 positions are modified to phosphoserine; by PKC: Ser-461 and Ser-568. The required for interaction with NRIP1 stretch occupies residues 571–590 (PHILKMEPADYNSQIIGHSL). Lys-575 participates in a covalent cross-link: Glycyl lysine isopeptide (Lys-Gly) (interchain with G-Cter in SUMO2).

The protein belongs to the nuclear hormone receptor family. NR2 subfamily. Homodimer. Heterodimer; with NR2C2 which is required for chromatin remodeling and for binding to promoter regions such as globin DR1 repeats. Interacts with ESR1; the interaction prevents homodimerization of ESR1 and suppresses its transcriptional activity and cell growth. Interacts with NRIP1 (via its LXXLL motifs); the interaction provides corepressor activity. Interacts with HDAC3 (via the DNA-binding domain); the interaction recruits phosphorylated NR2C1 to PML bodies for sumoylation. Interacts with HDAC4 (via the DNA-binding domain). Interacts with PIAS1; the interaction is required for sumoylation of NR2C1. Interacts with UBE2I; the interaction is required for sumoylation of NR2C1. Interacts with KAT2B; the interaction acts as a corepressor of gene expression. Sumoylation requires both PIAS1 and UBE2I. Sumoylation appears to dissociate NR2C1 from the PML nuclear bodies. Enhances the interaction with NRIP1 but inhibits interaction with KAT2B. In proliferating cells, stimulation by all-trans retinoic acid, activation of MAPK1-mediated phosphorylation and recruitment to PML bodies with subsequent sumoylation, suppresses OCT4 expression. In terms of processing, phosphorylated on several serine and threonine residues. Phosphorylation on Thr-210, stimulated by all-trans retinoic acid (atRA) mediates PML location and sumoylation in proliferating cells which then modulates its association with effector molecules, KAT2B and NRIP1. Phosphorylation on Ser-568 by PKC is important for protein stability and function as activator of RARB. As to expression, isoform 1 is highly expressed in the adlumenal compartment of the seminiferous tubule of adult testes (at protein level) and in the eyes of newborn animals. Weakly expressed in other adult organs including the seminal vesicle, prostate, ovary, adrenal gland, heart, thymus, placenta and brain. Expressed during embryonic stages in developing eyes, brain and cartilage primordia (at protein level). Also expressed in the developing spinal motor neurons and in the sympathetic-, parasympathetic- and sensory ganglia of the embryonic PNS. Expressed in the developing neural epithelia of the inner ear, nasal cavity, tongue and retina. At day 16.5, expressed in various tissues including kidney and intestine. In contrast, isoform 2 is widely expressed at a low level throughout the adult testis.

It is found in the nucleus. The protein localises to the PML body. Functionally, orphan nuclear receptor. Binds the IR7 element in the promoter of its own gene in an autoregulatory negative feedback mechanism. Primarily repressor of a broad range of genes including ESR1 and RARB. Together with NR2C2, forms the core of the DRED (direct repeat erythroid-definitive) complex that represses embryonic and fetal globin transcription. Binds to hormone response elements (HREs) consisting of two 5'-AGGTCA-3' half site direct repeat consensus sequences. Also activator of OCT4 gene expression. Plays a fundamental role in early embryogenesis and regulates embryonic stem cell proliferation and differentiation. Mediator of retinoic acid-regulated preadipocyte proliferation. The protein is Nuclear receptor subfamily 2 group C member 1 of Mus musculus (Mouse).